We begin with the raw amino-acid sequence, 146 residues long: Small ribosomal subunit protein uS9 (146 aa).

Residue S3 is modified to Phosphoserine. K60 carries the post-translational modification N6-acetyllysine.

It belongs to the universal ribosomal protein uS9 family. As to quaternary structure, component of the small ribosomal subunit. Part of the small subunit (SSU) processome, composed of more than 70 proteins and the RNA chaperone small nucleolar RNA (snoRNA) U3.

The protein localises to the cytoplasm. It localises to the nucleus. The protein resides in the nucleolus. Component of the small ribosomal subunit. The ribosome is a large ribonucleoprotein complex responsible for the synthesis of proteins in the cell. Part of the small subunit (SSU) processome, first precursor of the small eukaryotic ribosomal subunit. During the assembly of the SSU processome in the nucleolus, many ribosome biogenesis factors, an RNA chaperone and ribosomal proteins associate with the nascent pre-rRNA and work in concert to generate RNA folding, modifications, rearrangements and cleavage as well as targeted degradation of pre-ribosomal RNA by the RNA exosome. This chain is Small ribosomal subunit protein uS9 (RPS16), found in Bos taurus (Bovine).